Reading from the N-terminus, the 363-residue chain is Chorismate synthase (363 aa).

Residue Arg-48 coordinates NADP(+). FMN-binding positions include 125 to 127 (RSS), 238 to 239 (NA), Gly-278, 293 to 297 (KPTAS), and Arg-319.

It belongs to the chorismate synthase family. In terms of assembly, homotetramer. The cofactor is FMNH2.

It catalyses the reaction 5-O-(1-carboxyvinyl)-3-phosphoshikimate = chorismate + phosphate. Its pathway is metabolic intermediate biosynthesis; chorismate biosynthesis; chorismate from D-erythrose 4-phosphate and phosphoenolpyruvate: step 7/7. Catalyzes the anti-1,4-elimination of the C-3 phosphate and the C-6 proR hydrogen from 5-enolpyruvylshikimate-3-phosphate (EPSP) to yield chorismate, which is the branch point compound that serves as the starting substrate for the three terminal pathways of aromatic amino acid biosynthesis. This reaction introduces a second double bond into the aromatic ring system. This Acinetobacter baumannii (strain AB0057) protein is Chorismate synthase.